The chain runs to 712 residues: Methionine--tRNA ligase (712 aa).

The 'HIGH' region signature appears at proline 20–histidine 30. Zn(2+) is bound by residues cysteine 151, cysteine 154, cysteine 163, and cysteine 167. The 'KMSKS' region signature appears at lysine 334–threonine 338. ATP is bound at residue lysine 337. Residues alanine 559 to alanine 585 are disordered. A tRNA-binding domain is found at aspartate 610–arginine 712.

It belongs to the class-I aminoacyl-tRNA synthetase family. MetG type 1 subfamily. Homodimer. The cofactor is Zn(2+).

Its subcellular location is the cytoplasm. The catalysed reaction is tRNA(Met) + L-methionine + ATP = L-methionyl-tRNA(Met) + AMP + diphosphate. In terms of biological role, is required not only for elongation of protein synthesis but also for the initiation of all mRNA translation through initiator tRNA(fMet) aminoacylation. This Methanosarcina acetivorans (strain ATCC 35395 / DSM 2834 / JCM 12185 / C2A) protein is Methionine--tRNA ligase.